The following is a 25-amino-acid chain: Aurein-5.2 (25 aa).

As to expression, expressed by the skin dorsal glands.

Its subcellular location is the secreted. Has antimicrobial activity against L.lactis and S.uberis. The protein is Aurein-5.2 of Ranoidea raniformis (Southern bell frog).